Consider the following 128-residue polypeptide: uncharacterized protein (128 aa).

4 consecutive transmembrane segments (helical) span residues 5–25 (ILALLIWSSSLIVGKLTYSMM), 27–47 (PVLVVQVRLIIAMIIVMPLFL), 60–80 (QLWWLAFFNYTAVFLLQFIGL), and 87–107 (SAVTMIGLEPLLVVFVGHFFF). The 102-residue stretch at 9 to 110 (LIWSSSLIVG…FVGHFFFKTK (102 aa)) folds into the EamA domain.

It localises to the cell membrane. This is an uncharacterized protein from Haemophilus influenzae (strain ATCC 51907 / DSM 11121 / KW20 / Rd).